The following is a 236-amino-acid chain: Small ribosomal subunit protein uS2c (236 aa).

It belongs to the universal ribosomal protein uS2 family.

It localises to the plastid. The protein resides in the chloroplast. The protein is Small ribosomal subunit protein uS2c (rps2) of Gossypium barbadense (Sea Island cotton).